The sequence spans 716 residues: Fatty acid oxidation complex subunit alpha (716 aa).

Positions 1–189 (MIYQSPTIQV…KVGAIDAVVA (189 aa)) are enoyl-CoA hydratase/isomerase. A substrate-binding site is contributed by D296. Residues 311 to 716 (KDVNQAAVLG…AANNGSYYQA (406 aa)) form a 3-hydroxyacyl-CoA dehydrogenase region. Residues M324, D343, 400-402 (VVE), K407, and S429 each bind NAD(+). H450 (for 3-hydroxyacyl-CoA dehydrogenase activity) is an active-site residue. N453 contacts NAD(+). Substrate-binding residues include N500 and Y660.

It in the N-terminal section; belongs to the enoyl-CoA hydratase/isomerase family. This sequence in the C-terminal section; belongs to the 3-hydroxyacyl-CoA dehydrogenase family. As to quaternary structure, heterotetramer of two alpha chains (FadB) and two beta chains (FadA).

It carries out the reaction a (3S)-3-hydroxyacyl-CoA + NAD(+) = a 3-oxoacyl-CoA + NADH + H(+). The catalysed reaction is a (3S)-3-hydroxyacyl-CoA = a (2E)-enoyl-CoA + H2O. The enzyme catalyses a 4-saturated-(3S)-3-hydroxyacyl-CoA = a (3E)-enoyl-CoA + H2O. It catalyses the reaction (3S)-3-hydroxybutanoyl-CoA = (3R)-3-hydroxybutanoyl-CoA. It carries out the reaction a (3Z)-enoyl-CoA = a 4-saturated (2E)-enoyl-CoA. The catalysed reaction is a (3E)-enoyl-CoA = a 4-saturated (2E)-enoyl-CoA. It functions in the pathway lipid metabolism; fatty acid beta-oxidation. Its function is as follows. Involved in the aerobic and anaerobic degradation of long-chain fatty acids via beta-oxidation cycle. Catalyzes the formation of 3-oxoacyl-CoA from enoyl-CoA via L-3-hydroxyacyl-CoA. It can also use D-3-hydroxyacyl-CoA and cis-3-enoyl-CoA as substrate. This chain is Fatty acid oxidation complex subunit alpha, found in Shewanella frigidimarina (strain NCIMB 400).